A 595-amino-acid chain; its full sequence is Probable inactive glycosyltransferase 25 family member 3 (595 aa).

An N-terminal signal peptide occupies residues 1–24 (MRAAPAAPLLQLLLLLGPRPEAAG). N-linked (GlcNAc...) asparagine glycosylation is found at Asn-75, Asn-153, Asn-237, and Asn-360. The tract at residues 576 to 595 (RLDLAGGSGHSLRPHPRDEL) is disordered. Positions 592–595 (RDEL) match the Prevents secretion from ER motif.

Belongs to the glycosyltransferase 25 family.

It localises to the endoplasmic reticulum lumen. Its function is as follows. Probable cell adhesion protein involved in leukocyte transmigration across the blood-brain barrier. Does not express any beta-galactosyltransferase activity in vitro. This chain is Probable inactive glycosyltransferase 25 family member 3 (CERCAM), found in Bos taurus (Bovine).